We begin with the raw amino-acid sequence, 602 residues long: Gag-Pro polyprotein (602 aa).

Gly2 carries N-myristoyl glycine; by host lipidation. A PTAP/PSAP motif motif is present at residues 94 to 97 (PSAP). Residues 94 to 121 (PSAPAAPVPTPICPTTTPPPPPPPSPEA) are disordered. The segment covering 97-121 (PAAPVPTPICPTTTPPPPPPPSPEA) has biased composition (pro residues). Residues 124 to 127 (PPPY) carry the PPXY motif motif. 2 consecutive CCHC-type zinc fingers follow at residues 361–378 (QPCFRCGKVGHWSRDCTQ) and 384–401 (GPCPLCQDPSHWKRDCPQ). The interval 399–425 (CPQLKPPQEEGEPLLLDLPSTSGTTEE) is disordered. The Peptidase A2 domain maps to 473 to 551 (TQALLDTGAD…NKWTIIGRDA (79 aa)). Asp478 serves as the catalytic Protease; shared with dimeric partner. The segment at 582-602 (EHLPPPPQVDQFPLNLSASRP) is disordered.

In terms of assembly, homodimer; the homodimers are part of the immature particles. Interacts with human TSG101 and NEDD4; these interactions are essential for budding and release of viral particles. Homodimer; further assembles as homohexamers. In terms of processing, specific enzymatic cleavages by the viral protease yield mature proteins. The polyprotein is cleaved during and after budding, this process is termed maturation. The protease is autoproteolytically processed at its N- and C-termini. Post-translationally, phosphorylation of the matrix protein p19 by MAPK1 seems to play a role in budding. Myristoylated. Myristoylation of the matrix (MA) domain mediates the transport and binding of Gag polyproteins to the host plasma membrane and is required for the assembly of viral particles.

It is found in the virion. In terms of biological role, the matrix domain targets Gag, Gag-Pro and Gag-Pro-Pol polyproteins to the plasma membrane via a multipartite membrane binding signal, that includes its myristoylated N-terminus. Its function is as follows. Matrix protein. Forms the spherical core of the virus that encapsulates the genomic RNA-nucleocapsid complex. Functionally, binds strongly to viral nucleic acids and promote their aggregation. Also destabilizes the nucleic acids duplexes via highly structured zinc-binding motifs. In terms of biological role, the aspartyl protease mediates proteolytic cleavages of Gag and Gag-Pol polyproteins during or shortly after the release of the virion from the plasma membrane. Cleavages take place as an ordered, step-wise cascade to yield mature proteins. This process is called maturation. Displays maximal activity during the budding process just prior to particle release from the cell (Potential). Cleaves the translation initiation factor eIF4G leading to the inhibition of host cap-dependent translation. This Homo sapiens (Human) protein is Gag-Pro polyprotein (gag-pro).